Consider the following 1293-residue polypeptide: Phosphoribosylformylglycinamidine synthase (1293 aa).

ATP-binding positions include 305–316 (GAATGSGGEIRD) and Ala-676. The tract at residues 305 to 328 (GAATGSGGEIRDEGATGRGSKPKA) is disordered. Mg(2+) contacts are provided by Asp-677, Glu-716, Asn-720, and Asp-884. Ser-886 is a binding site for ATP. Residues 1040 to 1293 (MAILREQGVN…MFRNARVNLG (254 aa)) form the Glutamine amidotransferase type-1 domain. The active-site Nucleophile is the Cys-1133. Catalysis depends on residues His-1258 and Glu-1260.

This sequence in the N-terminal section; belongs to the FGAMS family. As to quaternary structure, monomer.

The protein resides in the cytoplasm. The enzyme catalyses N(2)-formyl-N(1)-(5-phospho-beta-D-ribosyl)glycinamide + L-glutamine + ATP + H2O = 2-formamido-N(1)-(5-O-phospho-beta-D-ribosyl)acetamidine + L-glutamate + ADP + phosphate + H(+). It participates in purine metabolism; IMP biosynthesis via de novo pathway; 5-amino-1-(5-phospho-D-ribosyl)imidazole from N(2)-formyl-N(1)-(5-phospho-D-ribosyl)glycinamide: step 1/2. In terms of biological role, phosphoribosylformylglycinamidine synthase involved in the purines biosynthetic pathway. Catalyzes the ATP-dependent conversion of formylglycinamide ribonucleotide (FGAR) and glutamine to yield formylglycinamidine ribonucleotide (FGAM) and glutamate. The polypeptide is Phosphoribosylformylglycinamidine synthase (Shewanella sp. (strain MR-7)).